The following is a 465-amino-acid chain: Hepatocyte nuclear factor 6 (465 aa).

4 disordered regions span residues Ser-17 to Met-55, Asp-120 to Leu-141, Leu-264 to Glu-290, and Asp-442 to Ala-465. Residues Pro-123–Arg-140 are compositionally biased toward basic residues. The span at Pro-273 to Gln-288 shows a compositional bias: polar residues. A DNA-binding region (CUT) is located at residues Gly-283–Ala-369. The homeobox DNA-binding region spans Pro-385–Trp-444. The segment covering Gly-448–Ala-465 has biased composition (low complexity).

This sequence belongs to the CUT homeobox family. As to quaternary structure, binds DNA as a monomer. Highly expressed in liver; lower expression in testis and skin.

Its subcellular location is the nucleus. Transcriptional activator. Binds the consensus sequence 5'-DHWATTGAYTWWD-3' on a variety of gene promoters such as those of HNF3B and TTR. Important for liver genes transcription. This chain is Hepatocyte nuclear factor 6 (ONECUT1), found in Homo sapiens (Human).